The primary structure comprises 306 residues: UDP-3-O-acyl-N-acetylglucosamine deacetylase (306 aa).

3 residues coordinate Zn(2+): His-78, His-237, and Asp-241. Catalysis depends on His-264, which acts as the Proton donor.

This sequence belongs to the LpxC family. The cofactor is Zn(2+).

The enzyme catalyses a UDP-3-O-[(3R)-3-hydroxyacyl]-N-acetyl-alpha-D-glucosamine + H2O = a UDP-3-O-[(3R)-3-hydroxyacyl]-alpha-D-glucosamine + acetate. It participates in glycolipid biosynthesis; lipid IV(A) biosynthesis; lipid IV(A) from (3R)-3-hydroxytetradecanoyl-[acyl-carrier-protein] and UDP-N-acetyl-alpha-D-glucosamine: step 2/6. Catalyzes the hydrolysis of UDP-3-O-myristoyl-N-acetylglucosamine to form UDP-3-O-myristoylglucosamine and acetate, the committed step in lipid A biosynthesis. This is UDP-3-O-acyl-N-acetylglucosamine deacetylase from Aromatoleum aromaticum (strain DSM 19018 / LMG 30748 / EbN1) (Azoarcus sp. (strain EbN1)).